We begin with the raw amino-acid sequence, 180 residues long: Oligoribonuclease (180 aa).

The 164-residue stretch at 7 to 170 (LIWIDLEMTG…DDIRESIAEL (164 aa)) folds into the Exonuclease domain. Residue Tyr128 is part of the active site.

The protein belongs to the oligoribonuclease family.

The protein localises to the cytoplasm. Its function is as follows. 3'-to-5' exoribonuclease specific for small oligoribonucleotides. The sequence is that of Oligoribonuclease from Ectopseudomonas mendocina (strain ymp) (Pseudomonas mendocina).